Consider the following 491-residue polypeptide: MHKKLPTRAENFSEWYNEIIKRAELAENAAVRGCMTIRPYGFAIWEKMQAILDKAFKATGHENAYFPIFIPKSYLNREAAHVEGFAKECAVVTHYRLKATEDGQQVVVDPSAKLEEELIVRPTSETIIWNSYKNWIQSYRDLPLLINQWCNVVRWEMRTRLFLRTAEFLWQEGHTAHATQAEAEQEALQMLNIYADFGKDYLAIPFLKGIKTEHERFAGAEETYTIEALMQDGKALQAGTSHFLGQRFAKAFEVTFTNQAGQLDYVWGTSWGLTTRLIGALVMTHSDDKGLVLPPRVAPIQIVIIPIYRTQEEKEAIQQQAQHIQQQLIAHNISAKLDGRDEHKPGWKFAEYELKGVPIRMAIGPNDLANNTVELTRRDTSEKTTVPTDNIIVVVKSMLDSIHDNLYQRAYEFREQNTYQVNSYEEFKTAISQKRGFILAHWDGTKETERQIHAETKATIRCIPLEVNTEPGVCIYTGKPSKQRVVFGQAY.

The protein belongs to the class-II aminoacyl-tRNA synthetase family. ProS type 3 subfamily. Homodimer.

The protein resides in the cytoplasm. It catalyses the reaction tRNA(Pro) + L-proline + ATP = L-prolyl-tRNA(Pro) + AMP + diphosphate. In terms of biological role, catalyzes the attachment of proline to tRNA(Pro) in a two-step reaction: proline is first activated by ATP to form Pro-AMP and then transferred to the acceptor end of tRNA(Pro). This Amoebophilus asiaticus (strain 5a2) protein is Proline--tRNA ligase.